A 134-amino-acid polypeptide reads, in one-letter code: Arginine decarboxylase proenzyme (134 aa).

Ser82 (schiff-base intermediate with substrate; via pyruvic acid) is an active-site residue. Residue Ser82 is modified to Pyruvic acid (Ser); by autocatalysis. His87 serves as the catalytic Proton acceptor; for processing activity. Residue Cys102 is the Proton donor; for catalytic activity of the active site.

Belongs to the prokaryotic AdoMetDC family. Type 1 subfamily. As to quaternary structure, heterooctamer of four alpha and four beta chains arranged as a tetramer of alpha/beta heterodimers. It depends on pyruvate as a cofactor. Is synthesized initially as an inactive proenzyme. Formation of the active enzyme involves a self-maturation process in which the active site pyruvoyl group is generated from an internal serine residue via an autocatalytic post-translational modification. Two non-identical subunits are generated from the proenzyme in this reaction, and the pyruvate is formed at the N-terminus of the alpha chain, which is derived from the carboxyl end of the proenzyme. The post-translation cleavage follows an unusual pathway, termed non-hydrolytic serinolysis, in which the side chain hydroxyl group of the serine supplies its oxygen atom to form the C-terminus of the beta chain, while the remainder of the serine residue undergoes an oxidative deamination to produce ammonia and the pyruvoyl group blocking the N-terminus of the alpha chain.

It catalyses the reaction L-arginine + H(+) = agmatine + CO2. The protein operates within amine and polyamine biosynthesis; agmatine biosynthesis; agmatine from L-arginine: step 1/1. Functionally, specifically catalyzes the decarboxylation of L-arginine to agmatine. Has no S-adenosylmethionine decarboxylase (AdoMetDC) activity. This Saccharolobus islandicus (strain M.16.4 / Kamchatka #3) (Sulfolobus islandicus) protein is Arginine decarboxylase proenzyme.